The following is a 256-amino-acid chain: 5-oxoprolinase subunit A 1 (256 aa).

It belongs to the LamB/PxpA family. In terms of assembly, forms a complex composed of PxpA, PxpB and PxpC.

It carries out the reaction 5-oxo-L-proline + ATP + 2 H2O = L-glutamate + ADP + phosphate + H(+). Catalyzes the cleavage of 5-oxoproline to form L-glutamate coupled to the hydrolysis of ATP to ADP and inorganic phosphate. The protein is 5-oxoprolinase subunit A 1 of Pseudomonas syringae pv. tomato (strain ATCC BAA-871 / DC3000).